We begin with the raw amino-acid sequence, 579 residues long: Moesin a (579 aa).

The FERM domain occupies 5-295 (ISVRVTTMDA…GNHELYMRRR (291 aa)). A coiled-coil region spans residues 306–448 (KAQAKEEKNH…EDEALEWQTK (143 aa)). 3 disordered regions span residues 308–341 (QAKE…EKIE), 376–418 (EQER…EHLA), and 464–519 (KNKV…KNER). Positions 376–400 (EQERKRAQEEAERLERERRLAEEAK) are enriched in basic and acidic residues. Residues 490 to 501 (AEASAELTSAAA) show a composition bias toward low complexity. Basic and acidic residues predominate over residues 502 to 519 (YKDRSEEERMTEAEKNER). Residues 517-551 (NERVQKHLLALTSELANARDETKKTQNDIIHAENV) adopt a coiled-coil conformation.

Its subcellular location is the cell membrane. It is found in the cell junction. In terms of biological role, positively regulates endothelial adherens junction formation and stabilization. Is thereby required for intersegmental vessel luminal membrane formation and stabilization during tubulogenesis in the early stages of development, independent of blood flow dynamics. The chain is Moesin a from Danio rerio (Zebrafish).